The sequence spans 258 residues: Snake venom serine protease (258 aa).

The signal sequence occupies residues 1–18 (MVLIRVLANLLILQLSYA). A propeptide spanning residues 19–24 (QKSSEL) is cleaved from the precursor. One can recognise a Peptidase S1 domain in the interval 25–249 (VIGGDECNIN…YTEWIQSILA (225 aa)). Disulfide bonds link Cys-31–Cys-163, Cys-50–Cys-66, Cys-98–Cys-256, Cys-142–Cys-210, Cys-174–Cys-189, and Cys-200–Cys-225. Residues His-65 and Asp-110 each act as charge relay system in the active site. The N-linked (GlcNAc...) asparagine glycan is linked to Asn-154. The active-site Charge relay system is the Ser-204.

This sequence belongs to the peptidase S1 family. Snake venom subfamily. In terms of assembly, monomer. Expressed by the venom gland.

It localises to the secreted. Snake venom serine protease that may act in the hemostasis system of the prey. This chain is Snake venom serine protease, found in Lachesis stenophrys (Central American bushmaster).